We begin with the raw amino-acid sequence, 264 residues long: Indolethylamine N-methyltransferase (264 aa).

At Lys-14 the chain carries N6-succinyllysine. S-adenosyl-L-methionine is bound by residues Tyr-21, Tyr-26, 64-65, Tyr-70, Asp-86, and Asn-91; that span reads GS. Lys-97 carries the N6-succinyllysine modification. Residues 143–144 and Phe-164 contribute to the S-adenosyl-L-methionine site; that span reads DV.

It belongs to the class I-like SAM-binding methyltransferase superfamily. NNMT/PNMT/TEMT family. In terms of assembly, monomer. Detected in lung and liver (at protein level).

Its subcellular location is the cytoplasm. The catalysed reaction is a tertiary amine + S-adenosyl-L-methionine = a methylated tertiary amine + S-adenosyl-L-homocysteine + H(+). The enzyme catalyses a secondary amine + S-adenosyl-L-methionine = a methylated secondary amine + S-adenosyl-L-homocysteine + H(+). It catalyses the reaction a primary amine + S-adenosyl-L-methionine = a methylated primary amine + S-adenosyl-L-homocysteine + H(+). It carries out the reaction dimethyl sulfide + S-adenosyl-L-methionine = trimethylsulfonium + S-adenosyl-L-homocysteine. Inhibited by the S-adenosyl-L-methionine analog sinefungin and by the product S-adenosyl-L-homocysteine. Catalyzes the N-methylation of tryptamine and structurally related compounds. Functions as a thioether S-methyltransferase and is active with a variety of thioethers and the corresponding selenium and tellurium compounds, including 3-methylthiopropionaldehyde, dimethyl selenide, dimethyl telluride, 2-methylthioethylamine, 2-methylthioethanol, methyl-n-propyl sulfide and diethyl sulfide. Plays an important role in the detoxification of selenium compounds. In Mus musculus (Mouse), this protein is Indolethylamine N-methyltransferase (Inmt).